The chain runs to 214 residues: uncharacterized protein (214 aa).

The helical transmembrane segment at 10 to 30 (LLLAGIGGFMVGGLASWVVSS) threads the bilayer. Residues 147 to 157 (SSQANSQSTQP) are compositionally biased toward polar residues. Positions 147 to 166 (SSQANSQSTQPRDPIPTENF) are disordered.

The protein localises to the membrane. This is an uncharacterized protein from Schizosaccharomyces pombe (strain 972 / ATCC 24843) (Fission yeast).